The following is a 260-amino-acid chain: Indole-3-glycerol phosphate synthase (260 aa).

This sequence belongs to the TrpC family.

The enzyme catalyses 1-(2-carboxyphenylamino)-1-deoxy-D-ribulose 5-phosphate + H(+) = (1S,2R)-1-C-(indol-3-yl)glycerol 3-phosphate + CO2 + H2O. It functions in the pathway amino-acid biosynthesis; L-tryptophan biosynthesis; L-tryptophan from chorismate: step 4/5. This is Indole-3-glycerol phosphate synthase from Nocardioides sp. (strain ATCC BAA-499 / JS614).